Consider the following 106-residue polypeptide: Iron-sulfur cluster assembly protein CyaY (106 aa).

This sequence belongs to the frataxin family.

Involved in iron-sulfur (Fe-S) cluster assembly. May act as a regulator of Fe-S biogenesis. In Yersinia pestis bv. Antiqua (strain Antiqua), this protein is Iron-sulfur cluster assembly protein CyaY.